We begin with the raw amino-acid sequence, 355 residues long: Replication-associated protein (355 aa).

The 104-residue stretch at 11 to 114 folds into the CRESS-DNA virus Rep endonuclease domain; it reads SHRNANTFLT…PLAVFERGTF (104 aa). The RCR-1 signature appears at 18 to 21; sequence FLTY. The a divalent metal cation site is built by glutamate 52, histidine 60, and histidine 62. The short motif at 60–62 is the RCR-2 element; the sequence is HLH. Catalysis depends on tyrosine 100, which acts as the For DNA cleavage activity. The RCR-3 motif lies at 100 to 103; that stretch reads YILK. Glutamate 104 serves as a coordination point for a divalent metal cation. The oligomerization stretch occupies residues 175–187; sequence SANKLFPEIQEEF. 229 to 236 serves as a coordination point for ATP; it reads GPTRTGKS. A transactivation region spans residues 252 to 270; sequence VDWSSYNEDAIYNIVDDIP. Positions 292-303 match the Nuclear localization signal motif; that stretch reads KYGKKKKVQKKS.

The protein belongs to the geminiviridae Rep protein family. Homooligomer. Rep binds to repeated DNA motifs (iterons). Forms the O-complex, which is a Rep-DNA complex involved in the initiation of RCR. Part of the C- and V-complexes which are RepA-Rep-DNA complexes involved in the c-sense and v-sense transcription. The cofactor is Mg(2+). Mn(2+) is required as a cofactor.

It localises to the host nucleus. Functionally, essential for the replication of viral ssDNA. The closed circular ssDNA genome is first converted to a superhelical dsDNA. Rep binds a specific region at the genome origin of replication. It introduces an endonucleolytic nick within the conserved sequence 5'-TAATATTAC-3' in the intergenic region of the genome present in all geminiviruses, thereby initiating the rolling circle replication (RCR). Following cleavage, binds covalently to the 5'-phosphate of DNA as a tyrosyl ester. The cleavage gives rise to a free 3'-OH that serves as a primer for the cellular DNA polymerase. The polymerase synthesizes the (+) strand DNA by rolling circle mechanism. After one round of replication, a Rep-catalyzed nucleotidyl transfer reaction releases a circular single-stranded virus genome, thereby terminating the replication. Displays origin-specific DNA cleavage, nucleotidyl transferase, ATPase and helicase activities. Acts as an inhibitor of C-sense gene transcription. The chain is Replication-associated protein from Maize streak virus genotype A (isolate South Africa) (MSV).